We begin with the raw amino-acid sequence, 262 residues long: 5'-nucleotidase SurE (262 aa).

A divalent metal cation is bound by residues D13, D14, S44, and N97.

The protein belongs to the SurE nucleotidase family. Requires a divalent metal cation as cofactor.

The protein resides in the cytoplasm. It catalyses the reaction a ribonucleoside 5'-phosphate + H2O = a ribonucleoside + phosphate. Nucleotidase that shows phosphatase activity on nucleoside 5'-monophosphates. In Myxococcus xanthus (strain DK1622), this protein is 5'-nucleotidase SurE.